Consider the following 141-residue polypeptide: Single-stranded DNA-binding protein 2 (141 aa).

Residues 1–104 enclose the SSB domain; the sequence is MLNRTVLVGR…VVADSVQFLE (104 aa). The segment at 104–141 is disordered; the sequence is EPKNNNQQQNNNYQQQRQTQTGNNPFDNNADSIEDLPF. Low complexity predominate over residues 107–127; it reads NNNQQQNNNYQQQRQTQTGNN.

In terms of assembly, homotetramer.

The protein is Single-stranded DNA-binding protein 2 (ssb-p) of Staphylococcus aureus (strain Mu50 / ATCC 700699).